Consider the following 421-residue polypeptide: Aspartokinase (421 aa).

Lysine 7–glycine 10 is an ATP binding site. Arginine 25 to lysine 30 serves as a coordination point for substrate. Serine 41 provides a ligand contact to ATP. Substrate is bound by residues aspartate 45 to aspartate 49, glutamate 74, leucine 125 to glutamate 126, arginine 151 to serine 154, and serine 154. ATP-binding positions include threonine 174–aspartate 175, phenylalanine 180–arginine 185, and lysine 210. ACT domains follow at residues valine 267–serine 348 and leucine 349–arginine 421. Substrate contacts are provided by residues aspartate 274, aspartate 274–alanine 279, asparagine 292–aspartate 294, glutamine 298, valine 360–threonine 361, asparagine 374–isoleucine 375, and serine 381–glutamate 382.

Belongs to the aspartokinase family. Heterotetramer consisting of 2 isoforms Alpha (catalytic and regulation) and of a homodimer of 2 isoforms Beta (regulation).

The enzyme catalyses L-aspartate + ATP = 4-phospho-L-aspartate + ADP. It participates in amino-acid biosynthesis; L-lysine biosynthesis via DAP pathway; (S)-tetrahydrodipicolinate from L-aspartate: step 1/4. The protein operates within amino-acid biosynthesis; L-methionine biosynthesis via de novo pathway; L-homoserine from L-aspartate: step 1/3. Its pathway is amino-acid biosynthesis; L-threonine biosynthesis; L-threonine from L-aspartate: step 1/5. Its activity is regulated as follows. Feedback inhibition by lysine and threonine. Its function is as follows. Catalyzes the phosphorylation of the beta-carboxyl group of aspartic acid with ATP to yield 4-phospho-L-aspartate, which is involved in the branched biosynthetic pathway leading to the biosynthesis of amino acids lysine, threonine, isoleucine and methionine. The sequence is that of Aspartokinase (ask) from Mycobacterium bovis (strain ATCC BAA-935 / AF2122/97).